Reading from the N-terminus, the 525-residue chain is MNLVDEKDEKPTRWEKCVEFIMFHFRWVFVVPFLLPLSFLFNTVFDFRNRIVHAVNSAPNAHVRKVKHIQEQLKEWNDNGRKSKLVNARPGWLTMSFRFPLYKENATKIATDKLFDILDLDVEKMTVKAEPGVTMGQLSQYLISRGYTLPVLPELDDLTVGGLINGCGVESGSFKYGMFQHICTGYEVVMSDGELKNVYPDSAAKTEQAKQDNSLFFAIPWSQGTICFLVAATIKIIPCKKYVKLTYKKTETLSEMCEQLTEDSDRNSENVDFVEALMFNKEKGCIMLGEFSDGPDTHDEVVNPIGRWYKKWFYTHVEDLINKKHESIEYIPLRDYYHRHSKSIFWELRDIVPFGNNVLFRYLMAWMCPPKIAFLKATTPNVLRKLYDRSHVLQDMLVPLDKLEECIDLFHKEVEIYPMWLCPFYLKSQPGLMKLRNATHKMYVDVGAYGVTSKDGYHHERTTRRLESFVRSVNGFQMTYADIYMTRAEYAEMFDRTLYDWKRASCKCIDAFPDIYDKICRSGRR.

The next 2 helical transmembrane spans lie at 27-47 (WVFV…VFDF) and 214-234 (SLFF…AATI). The region spanning 47–239 (FRNRIVHAVN…VAATIKIIPC (193 aa)) is the FAD-binding PCMH-type domain.

This sequence belongs to the FAD-binding oxidoreductase/transferase type 4 family. FAD serves as cofactor.

Its subcellular location is the endoplasmic reticulum membrane. The protein resides in the golgi apparatus membrane. The catalysed reaction is cholesterol + NADP(+) = desmosterol + NADPH + H(+). The enzyme catalyses lanosterol + NADPH + H(+) = 24,25-dihydrolanosterol + NADP(+). It catalyses the reaction 5alpha-cholest-8-en-3beta-ol + NADP(+) = zymosterol + NADPH + H(+). It functions in the pathway steroid biosynthesis; cholesterol biosynthesis. Functionally, catalyzes the reduction of the delta-24 double bond of sterol intermediates during cholesterol biosynthesis. This Caenorhabditis elegans protein is Delta(24)-sterol reductase homolog dhcr-24.